The sequence spans 150 residues: UPF0098 protein TC_0109 (150 aa).

Belongs to the UPF0098 family.

This is UPF0098 protein TC_0109 from Chlamydia muridarum (strain MoPn / Nigg).